The chain runs to 61 residues: uncharacterized protein (61 aa).

Positions 23 to 61 (VPTKWQDYKKPGPNQKYTSDGKKRRRIRRSQKSILGVRS) are disordered. Positions 44 to 53 (KKRRRIRRSQ) are enriched in basic residues.

This is an uncharacterized protein from Archaeoglobus fulgidus (strain ATCC 49558 / DSM 4304 / JCM 9628 / NBRC 100126 / VC-16).